We begin with the raw amino-acid sequence, 332 residues long: tRNA uridine(34) hydroxylase (332 aa).

One can recognise a Rhodanese domain in the interval 123-217 (SDPEVLLVDT…YLEEVKQEES (95 aa)). Catalysis depends on C177, which acts as the Cysteine persulfide intermediate. The interval 302–332 (SDVGAVIQSRRDNKENLKKSQVKLNNKKYNK) is disordered. Residues 310–319 (SRRDNKENLK) show a composition bias toward basic and acidic residues.

This sequence belongs to the TrhO family.

It carries out the reaction uridine(34) in tRNA + AH2 + O2 = 5-hydroxyuridine(34) in tRNA + A + H2O. Its function is as follows. Catalyzes oxygen-dependent 5-hydroxyuridine (ho5U) modification at position 34 in tRNAs. The polypeptide is tRNA uridine(34) hydroxylase (Shewanella woodyi (strain ATCC 51908 / MS32)).